A 162-amino-acid chain; its full sequence is NADH-quinone oxidoreductase subunit I (162 aa).

4Fe-4S ferredoxin-type domains follow at residues 52 to 82 and 93 to 122; these read LRRY…IEAG and VRYD…EGPN. Positions 62, 65, 68, 72, 102, 105, 108, and 112 each coordinate [4Fe-4S] cluster.

It belongs to the complex I 23 kDa subunit family. In terms of assembly, NDH-1 is composed of 14 different subunits. Subunits NuoA, H, J, K, L, M, N constitute the membrane sector of the complex. [4Fe-4S] cluster serves as cofactor.

It is found in the cell inner membrane. The enzyme catalyses a quinone + NADH + 5 H(+)(in) = a quinol + NAD(+) + 4 H(+)(out). Functionally, NDH-1 shuttles electrons from NADH, via FMN and iron-sulfur (Fe-S) centers, to quinones in the respiratory chain. The immediate electron acceptor for the enzyme in this species is believed to be ubiquinone. Couples the redox reaction to proton translocation (for every two electrons transferred, four hydrogen ions are translocated across the cytoplasmic membrane), and thus conserves the redox energy in a proton gradient. The protein is NADH-quinone oxidoreductase subunit I of Bradyrhizobium sp. (strain ORS 278).